The chain runs to 386 residues: Alanine racemase (386 aa).

Lys-38 functions as the Proton acceptor; specific for D-alanine in the catalytic mechanism. Lys-38 is subject to N6-(pyridoxal phosphate)lysine. Arg-136 lines the substrate pocket. Tyr-267 (proton acceptor; specific for L-alanine) is an active-site residue. Substrate is bound at residue Met-315.

This sequence belongs to the alanine racemase family. Pyridoxal 5'-phosphate is required as a cofactor.

It carries out the reaction L-alanine = D-alanine. It participates in amino-acid biosynthesis; D-alanine biosynthesis; D-alanine from L-alanine: step 1/1. Its function is as follows. Catalyzes the interconversion of L-alanine and D-alanine. May also act on other amino acids. In Clostridium perfringens (strain ATCC 13124 / DSM 756 / JCM 1290 / NCIMB 6125 / NCTC 8237 / Type A), this protein is Alanine racemase (alr).